The chain runs to 81 residues: UPF0434 protein msl4429 (81 aa).

The protein belongs to the UPF0434 family.

In Mesorhizobium japonicum (strain LMG 29417 / CECT 9101 / MAFF 303099) (Mesorhizobium loti (strain MAFF 303099)), this protein is UPF0434 protein msl4429.